A 398-amino-acid chain; its full sequence is Alpha-(1,3)-fucosyltransferase 4 (398 aa).

Residues 1–15 (MRARWGRRGARRGGP) are Cytoplasmic-facing. A helical; Signal-anchor for type II membrane protein membrane pass occupies residues 16 to 40 (GLPGTHLALLAASLLSSSVAIYVCW). Over 41-398 (KQLPPLPWAS…VPNLAGWFQQ (358 aa)) the chain is Lumenal. N-linked (GlcNAc...) asparagine glycans are attached at residues Asn84, Asn183, and Asn311.

It belongs to the glycosyltransferase 10 family.

The protein localises to the golgi apparatus. The protein resides in the golgi stack membrane. It catalyses the reaction a beta-D-galactosyl-(1-&gt;4)-N-acetyl-beta-D-glucosaminyl derivative + GDP-beta-L-fucose = a beta-D-galactosyl-(1-&gt;4)-[alpha-L-fucosyl-(1-&gt;3)]-N-acetyl-beta-D-glucosaminyl derivative + GDP + H(+). The enzyme catalyses an N-acetyl-alpha-neuraminyl-(2-&gt;3)-beta-D-galactosyl-(1-&gt;4)-N-acetyl-beta-D-glucosaminyl derivative + GDP-beta-L-fucose = an alpha-Neu5Ac-(2-&gt;3)-beta-D-Gal-(1-&gt;4)-[alpha-L-Fuc-(1-&gt;3)]-beta-D-GlcNAc derivative + GDP + H(+). The catalysed reaction is an alpha-Neu5Ac-(2-&gt;3)-beta-D-Gal-(1-&gt;4)-beta-D-GlcNAc-(1-&gt;3)-beta-D-Gal-(1-&gt;4)-beta-D-GlcNAc derivative + GDP-beta-L-fucose = an alpha-Neu5Ac-(2-&gt;3)-beta-D-Gal-(1-&gt;4)-beta-D-GlcNAc-(1-&gt;3)-beta-D-Gal-(1-&gt;4)-[alpha-L-Fuc-(1-&gt;3)]-beta-D-GlcNAc derivative + GDP + H(+). It carries out the reaction an alpha-Neu5Ac-(2-&gt;3)-beta-D-Gal-(1-&gt;4)-beta-D-GlcNAc6S derivative + GDP-beta-L-fucose = an alpha-Neu5Ac-(2-&gt;3)-beta-D-Gal-(1-&gt;4)-[alpha-L-Fuc-(1-&gt;3)]-beta-D-GlcNAc6S derivative + GDP + H(+). Its pathway is protein modification; protein glycosylation. Functionally, catalyzes alpha(1-&gt;3) linkage of fucosyl moiety transferred from GDP-beta-L-fucose to N-acetyl glucosamine (GlcNAc) within type 2 lactosamine (LacNAc, Gal-beta(1-&gt;4)GlcNAc) glycan attached to N- or O-linked glycoproteins. Robustly fucosylates nonsialylated distal LacNAc unit of the polylactosamine chain to form Lewis X antigen (CD15), a glycan determinant known to mediate important cellular functions in development and immunity. Fucosylates with lower efficiency sialylated LacNAc acceptors to form sialyl Lewis X and 6-sulfo sialyl Lewis X determinants that serve as recognition epitopes for C-type lectins. Together with FUT7 contributes to SELE, SELL and SELP selectin ligand biosynthesis and selectin-dependent lymphocyte homing, leukocyte migration and blood leukocyte homeostasis. In a cell type specific manner, may also fucosylate the internal LacNAc unit of the polylactosamine chain to form VIM-2 antigen that serves as recognition epitope for SELE. This Bos taurus (Bovine) protein is Alpha-(1,3)-fucosyltransferase 4 (FUT4).